The sequence spans 452 residues: UPF0210 protein Cthe_0410 (452 aa).

It belongs to the UPF0210 family. In terms of assembly, homodimer.

The sequence is that of UPF0210 protein Cthe_0410 from Acetivibrio thermocellus (strain ATCC 27405 / DSM 1237 / JCM 9322 / NBRC 103400 / NCIMB 10682 / NRRL B-4536 / VPI 7372) (Clostridium thermocellum).